We begin with the raw amino-acid sequence, 631 residues long: Phosphomethylpyrimidine synthase (631 aa).

Residues Asn231, Met260, Tyr289, His325, 345 to 347 (SRG), 386 to 389 (DGLR), and Glu425 each bind substrate. His429 is a binding site for Zn(2+). Residue Tyr452 coordinates substrate. Residue His493 participates in Zn(2+) binding. Residues Cys573, Cys576, and Cys581 each coordinate [4Fe-4S] cluster.

Belongs to the ThiC family. In terms of assembly, homodimer. [4Fe-4S] cluster serves as cofactor.

The catalysed reaction is 5-amino-1-(5-phospho-beta-D-ribosyl)imidazole + S-adenosyl-L-methionine = 4-amino-2-methyl-5-(phosphooxymethyl)pyrimidine + CO + 5'-deoxyadenosine + formate + L-methionine + 3 H(+). The protein operates within cofactor biosynthesis; thiamine diphosphate biosynthesis. Its function is as follows. Catalyzes the synthesis of the hydroxymethylpyrimidine phosphate (HMP-P) moiety of thiamine from aminoimidazole ribotide (AIR) in a radical S-adenosyl-L-methionine (SAM)-dependent reaction. In Acinetobacter baylyi (strain ATCC 33305 / BD413 / ADP1), this protein is Phosphomethylpyrimidine synthase.